We begin with the raw amino-acid sequence, 651 residues long: E3 SUMO-protein ligase PIAS1 (651 aa).

The residue at position 2 (Ala-2) is an N-acetylalanine. The interval 2-200 (ADSAELKQMV…KCDFTVQVQL (199 aa)) is required for interaction with MSX1. Positions 11 to 45 (VMSLRVSELQVLLGYAGRNKHGRKHELLTKALHLL) constitute an SAP domain. Positions 19–23 (LQVLL) match the LXXLL motif motif. Glycyl lysine isopeptide (Lys-Gly) (interchain with G-Cter in SUMO2) cross-links involve residues Lys-40 and Lys-46. Positions 56 to 64 (KIKELYRRR) match the Nuclear localization signal motif. One can recognise a PINIT domain in the interval 124-288 (HLTSALHPVH…SMAVYLVKQL (165 aa)). Residues Lys-137 and Lys-238 each participate in a glycyl lysine isopeptide (Lys-Gly) (interchain with G-Cter in SUMO2) cross-link. The SP-RING-type zinc-finger motif lies at 320–405 (PDSEIATTSL…LKYCTDCDEI (86 aa)). Zn(2+) contacts are provided by Cys-351, His-353, Cys-374, and Cys-377. The Nuclear localization signal motif lies at 368 to 380 (KKPTWVCPVCDKK). A Glycyl lysine isopeptide (Lys-Gly) (interchain with G-Cter in SUMO2) cross-link involves residue Lys-453. An SUMO1-binding region spans residues 462-473 (LTIDSSSDEEEE). The segment at 465 to 511 (DSSSDEEEEEPSAKRTCPSLSPTSPLNNKGILSLPHQASPVSRTPSL) is disordered. 4 positions are modified to phosphoserine: Ser-467, Ser-468, Ser-483, and Ser-485. The segment covering 482 to 491 (PSLSPTSPLN) has biased composition (polar residues). At Thr-487 the chain carries Phosphothreonine. Ser-488 is subject to Phosphoserine. Residue Lys-493 forms a Glycyl lysine isopeptide (Lys-Gly) (interchain with G-Cter in SUMO2) linkage. 3 positions are modified to phosphoserine: Ser-503, Ser-510, and Ser-522. Repeat copies occupy residues 520–523 (NTSL) and 557–560 (NTSL). Residues 520–615 (NTSLIQDYRH…GSSSGSNSSL (96 aa)) are 4 X 4 AA repeats of N-T-S-L. One copy of the 3; approximate repeat lies at 598-601 (STSL). Low complexity predominate over residues 599–621 (TSLPTTNGSSSGSNSSLVSSNSL). The interval 599 to 632 (TSLPTTNGSSSGSNSSLVSSNSLRESHSHTVTNR) is disordered. Residues 612–615 (NSSL) form a 4; approximate repeat.

Belongs to the PIAS family. In terms of assembly, interacts with NCOA2 and AR. Interacts with NR2C1; the interaction promotes its sumoylation. Interacts with DDX21, CSRP2, AXIN1, JUN, UBE2I, SUMO1, SATB2, PLAG1, TP53 and STAT1 (dimer), following IFNA1-stimulation. Interacts with SP3 (preferentially when SUMO-modified). Interacts with KLF8; the interaction results in SUMO ligation and repression of KLF8 transcriptional activity and of its cell cycle progression into G(1) phase. Interacts with CHUK/IKKA; this interaction induces PIAS1 phosphorylation. Interacts with PTK2/FAK1; the interaction promotes its sumoylation. Interacts with DDX5. Interacts with PML. Interacts with MTA1. Interacts with SUMO1P1/SUMO5. Interacts with PRDM1/Blimp-1. Interacts (via N-terminus) with MSX1 (via C-terminus); the interaction is required for the localization of both proteins to the nuclear periphery and specific binding of MSX1 to the core enhancer region in target gene promoters. (Microbial infection) Interacts with ebolavirus VP35; this interaction mediates the sumoylation of IRF7 and contributes to the viral inhibition of IFN-type I production. In terms of processing, sumoylated. Expressed in numerous tissues with highest level in testis.

The protein resides in the nucleus. It is found in the nucleus speckle. It localises to the PML body. Its subcellular location is the cytoplasm. The protein localises to the cytoskeleton. The protein operates within protein modification; protein sumoylation. Functions as an E3-type small ubiquitin-like modifier (SUMO) ligase, stabilizing the interaction between UBE2I and the substrate, and as a SUMO-tethering factor. Catalyzes sumoylation of various proteins, such as CEBPB, MRE11, MTA1, PTK2 and PML. Plays a crucial role as a transcriptional coregulation in various cellular pathways, including the STAT pathway, the p53 pathway and the steroid hormone signaling pathway. In vitro, binds A/T-rich DNA. The effects of this transcriptional coregulation, transactivation or silencing, may vary depending upon the biological context. Mediates sumoylation of MRE11, stabilizing MRE11 on chromatin during end resection. Sumoylates PML (at 'Lys-65' and 'Lys-160') and PML-RAR and promotes their ubiquitin-mediated degradation. PIAS1-mediated sumoylation of PML promotes its interaction with CSNK2A1/CK2 which in turn promotes PML phosphorylation and degradation. Enhances the sumoylation of MTA1 and may participate in its paralog-selective sumoylation. Plays a dynamic role in adipogenesis by promoting the SUMOylation and degradation of CEBPB. Mediates the nuclear mobility and localization of MSX1 to the nuclear periphery, whereby MSX1 is brought into the proximity of target myoblast differentiation factor genes. Also required for the binding of MSX1 to the core enhancer region in target gene promoter regions, independent of its sumoylation activity. Capable of binding to the core enhancer region TAAT box in the MYOD1 gene promoter. Functionally, (Microbial infection) Restricts Epstein-Barr virus (EBV) lytic replication by acting as an inhibitor for transcription factors involved in lytic gene expression. The virus can use apoptotic caspases to antagonize PIAS1-mediated restriction and express its lytic genes. The sequence is that of E3 SUMO-protein ligase PIAS1 (PIAS1) from Homo sapiens (Human).